Consider the following 553-residue polypeptide: RNA exonuclease 1 (553 aa).

Phosphoserine is present on Ser-24. Positions 167–194 (MEKINKLKELQKKKKITINDLVLSEQQL) form a coiled coil. The 149-residue stretch at 225–373 (IFALDCEMCL…EDARACLELT (149 aa)) folds into the Exonuclease domain. Residues 509–533 (WNNLSTELEFIQDKKERLDKRRERE) are a coiled coil.

This sequence belongs to the REXO1/REXO3 family.

It is found in the nucleus. Its function is as follows. 3' exoribonuclease required for 5S rRNA maturation and for the proper maturation of the 5' cistron of the tRNA-Arg3 dicistronic gene. Involved with REX2 in the maturation of the 5.8S rRNA, and with REX2 and REX3, in the 3' processing of the U5L snRNA. The polypeptide is RNA exonuclease 1 (RNH70) (Saccharomyces cerevisiae (strain ATCC 204508 / S288c) (Baker's yeast)).